We begin with the raw amino-acid sequence, 124 residues long: Ribonuclease pancreatic (124 aa).

Residues 1-13 (KETAAEKFQRQHM) show a composition bias toward basic and acidic residues. The disordered stretch occupies residues 1 to 21 (KETAAEKFQRQHMDTSSSLSN). Positions 7 and 10 each coordinate substrate. His12 serves as the catalytic Proton acceptor. Disulfide bonds link Cys26–Cys84, Cys40–Cys95, Cys58–Cys110, and Cys65–Cys72. Asn34 carries N-linked (GlcNAc...) asparagine glycosylation. Substrate-binding positions include 41 to 45 (KPVNT), Lys66, and Arg85. The active-site Proton donor is the His119.

This sequence belongs to the pancreatic ribonuclease family. In terms of assembly, monomer. Interacts with and forms tight 1:1 complexes with RNH1. Dimerization of two such complexes may occur. Interaction with RNH1 inhibits this protein. Pancreas.

The protein localises to the secreted. The enzyme catalyses an [RNA] containing cytidine + H2O = an [RNA]-3'-cytidine-3'-phosphate + a 5'-hydroxy-ribonucleotide-3'-[RNA].. The catalysed reaction is an [RNA] containing uridine + H2O = an [RNA]-3'-uridine-3'-phosphate + a 5'-hydroxy-ribonucleotide-3'-[RNA].. In terms of biological role, endonuclease that catalyzes the cleavage of RNA on the 3' side of pyrimidine nucleotides. Acts on single-stranded and double-stranded RNA. The protein is Ribonuclease pancreatic (RNASE1) of Hippopotamus amphibius (Hippopotamus).